Reading from the N-terminus, the 441-residue chain is Alpha-monoglucosyldiacylglycerol synthase (441 aa).

The protein belongs to the glycosyltransferase group 1 family. Glycosyltransferase 4 subfamily. It depends on Mg(2+) as a cofactor.

It is found in the cell membrane. The catalysed reaction is a 1,2-diacyl-sn-glycerol + UDP-alpha-D-glucose = a 1,2-diacyl-3-O-(alpha-D-glucopyranosyl)-sn-glycerol + UDP + H(+). Its activity is regulated as follows. Activated by the negatively charged lipid phosphatidylglycerol (PG). Functionally, glucosyltransferase involved in the biosynthesis of the non-bilayer-prone membrane lipid alpha-monoglucosyldiacylglycerol. This is a major component for maintaining a certain anionic lipid surface charge density, for balancing the bilayer to non-bilayer phase equilibria and for keeping a constant lipid bilayer spontaneous curvature (curvature packing stress). Catalyzes the transfer of a glucosyl residue from UDP-Glc to diacylglycerol (DAG) acceptor to form the corresponding alpha-glucosyl-DAG (1,2-diacyl-3-O-(alpha-D-glucopyranosyl)-sn-glycerol). It can only use UDP-Glc as sugar donor. The polypeptide is Alpha-monoglucosyldiacylglycerol synthase (Streptococcus pneumoniae (strain ATCC BAA-255 / R6)).